An 821-amino-acid chain; its full sequence is DNA gyrase subunit A (821 aa).

The 466-residue stretch at 35-500 (LPDVRDGLKP…GLETIEDEDL (466 aa)) folds into the Topo IIA-type catalytic domain. The O-(5'-phospho-DNA)-tyrosine intermediate role is filled by Tyr123. Positions 527-533 (QKRGGKG) match the GyrA-box motif.

Belongs to the type II topoisomerase GyrA/ParC subunit family. In terms of assembly, heterotetramer, composed of two GyrA and two GyrB chains. In the heterotetramer, GyrA contains the active site tyrosine that forms a transient covalent intermediate with DNA, while GyrB binds cofactors and catalyzes ATP hydrolysis.

The protein localises to the cytoplasm. The enzyme catalyses ATP-dependent breakage, passage and rejoining of double-stranded DNA.. Functionally, a type II topoisomerase that negatively supercoils closed circular double-stranded (ds) DNA in an ATP-dependent manner to modulate DNA topology and maintain chromosomes in an underwound state. Negative supercoiling favors strand separation, and DNA replication, transcription, recombination and repair, all of which involve strand separation. Also able to catalyze the interconversion of other topological isomers of dsDNA rings, including catenanes and knotted rings. Type II topoisomerases break and join 2 DNA strands simultaneously in an ATP-dependent manner. The chain is DNA gyrase subunit A from Bacillus subtilis (strain 168).